A 531-amino-acid chain; its full sequence is SWI/SNF-related matrix-associated actin-dependent regulator of chromatin subfamily D member 2 (531 aa).

The tract at residues 20-85 is disordered; it reads AVAAALGAPP…MSPGSRMPMA (66 aa). Low complexity predominate over residues 34 to 45; that stretch reads PGMLPSPALRGP. 2 positions are modified to asymmetric dimethylarginine: Arg81 and Arg104. Position 203 is a phosphoserine (Ser203). The interval 205–226 is disordered; the sequence is SKADGDNAGTAGTPGGTPAADK. Over residues 210–225 the composition is skewed to low complexity; it reads DNAGTAGTPGGTPAAD. Residue Thr217 is modified to Phosphothreonine. Residue Lys226 forms a Glycyl lysine isopeptide (Lys-Gly) (interchain with G-Cter in SUMO2) linkage. The SWIB/MDM2 domain occupies 306–383; the sequence is HQPPQYKLDP…PMKLAGLLQH (78 aa).

Belongs to the SMARCD family. Component of the multiprotein chromatin-remodeling complexes SWI/SNF: SWI/SNF-A (BAF), SWI/SNF-B (PBAF) and related complexes. The canonical complex contains a catalytic subunit (either SMARCA4/BRG1/BAF190A or SMARCA2/BRM/BAF190B), and at least SMARCE1, ACTL6A/BAF53, SMARCC1/BAF155, SMARCC2/BAF170, and SMARCB1/SNF5/BAF47. Other subunits specific to each of the complexes may also be present permitting several possible combinations developmentally and tissue specific. Component of the BAF complex, which includes at least actin (ACTB), ARID1A/BAF250A, ARID1B/BAF250B, SMARCA2/BRM, SMARCA4/BRG1, ACTL6A/BAF53, ACTL6B/BAF53B, SMARCE1/BAF57, SMARCC1/BAF155, SMARCC2/BAF170, SMARCB1/SNF5/INI1, and one or more SMARCD1/BAF60A, SMARCD2/BAF60B, or SMARCD3/BAF60C. In muscle cells, the BAF complex also contains DPF3. Component of the SWI/SNF-B (PBAF) chromatin remodeling complex, at least composed of SMARCA4/BRG1, SMARCB1/BAF47/SNF5, ACTL6A/BAF53A or ACTL6B/BAF53B, SMARCE1/BAF57, SMARCD1/BAF60A, SMARCD2/BAF60B, perhaps SMARCD3/BAF60C, SMARCC1/BAF155, SMARCC2/BAF170, PBRM1/BAF180, ARID2/BAF200 and actin (ACTB). Interacts with UNKL. Interacts with CEBPE. In terms of processing, ubiquitinated through a signaling process involving RAC1 and the RING finger protein UNKL.

The protein localises to the nucleus. In terms of biological role, involved in transcriptional activation and repression of select genes by chromatin remodeling (alteration of DNA-nucleosome topology). Component of SWI/SNF chromatin remodeling complexes that carry out key enzymatic activities, changing chromatin structure by altering DNA-histone contacts within a nucleosome in an ATP-dependent manner. Critical regulator of myeloid differentiation, controlling granulocytopoiesis and the expression of genes involved in neutrophil granule formation. The protein is SWI/SNF-related matrix-associated actin-dependent regulator of chromatin subfamily D member 2 (Smarcd2) of Mus musculus (Mouse).